Reading from the N-terminus, the 403-residue chain is Putative queuine tRNA-ribosyltransferase (403 aa).

Asp-91 acts as the Proton acceptor in catalysis. Substrate is bound by residues 91-95, Asp-177, Gln-218, and Gly-245; that span reads DSGGF. The RNA binding stretch occupies residues 275 to 281; that stretch reads GIGAIED. The active-site Nucleophile is Asp-294. Residues 299–303 are RNA binding; important for wobble base 34 recognition; the sequence is ARWAR. The Zn(2+) site is built by Cys-341, Cys-343, Cys-346, and His-372.

Belongs to the queuine tRNA-ribosyltransferase family. As to quaternary structure, homodimer. Within each dimer, one monomer is responsible for RNA recognition and catalysis, while the other monomer binds to the replacement base PreQ1. The cofactor is Zn(2+).

The catalysed reaction is 7-aminomethyl-7-carbaguanine + guanosine(34) in tRNA = 7-aminomethyl-7-carbaguanosine(34) in tRNA + guanine. Functionally, catalyzes the base-exchange of a guanine (G) residue with the queuine precursor 7-aminomethyl-7-deazaguanine (PreQ1) at position 34 (anticodon wobble position) in tRNAs with GU(N) anticodons (tRNA-Asp, -Asn, -His and -Tyr). Catalysis occurs through a double-displacement mechanism. The nucleophile active site attacks the C1' of nucleotide 34 to detach the guanine base from the RNA, forming a covalent enzyme-RNA intermediate. The proton acceptor active site deprotonates the incoming PreQ1, allowing a nucleophilic attack on the C1' of the ribose to form the product. After dissociation, two additional enzymatic reactions on the tRNA convert PreQ1 to queuine (Q), resulting in the hypermodified nucleoside queuosine (7-(((4,5-cis-dihydroxy-2-cyclopenten-1-yl)amino)methyl)-7-deazaguanosine). The chain is Putative queuine tRNA-ribosyltransferase from Archaeoglobus fulgidus (strain ATCC 49558 / DSM 4304 / JCM 9628 / NBRC 100126 / VC-16).